A 217-amino-acid chain; its full sequence is Harpin secretion protein HrcR (217 aa).

4 consecutive transmembrane segments (helical) span residues 11–31, 52–72, 158–178, and 185–205; these read FALF…CTCF, PNMA…APVF, IGFL…NVLL, and VAPM…INGW.

The protein belongs to the FliP/MopC/SpaP family.

The protein resides in the cell membrane. Its function is as follows. Required for the secretion of harpin. In Erwinia amylovora (Fire blight bacteria), this protein is Harpin secretion protein HrcR (hrcR).